The following is a 497-amino-acid chain: Probable cytosol aminopeptidase (497 aa).

K265 and D270 together coordinate Mn(2+). The active site involves K277. Mn(2+) is bound by residues D288, D347, and E349. R351 is an active-site residue.

It belongs to the peptidase M17 family. Mn(2+) is required as a cofactor.

The protein resides in the cytoplasm. It carries out the reaction Release of an N-terminal amino acid, Xaa-|-Yaa-, in which Xaa is preferably Leu, but may be other amino acids including Pro although not Arg or Lys, and Yaa may be Pro. Amino acid amides and methyl esters are also readily hydrolyzed, but rates on arylamides are exceedingly low.. The enzyme catalyses Release of an N-terminal amino acid, preferentially leucine, but not glutamic or aspartic acids.. In terms of biological role, presumably involved in the processing and regular turnover of intracellular proteins. Catalyzes the removal of unsubstituted N-terminal amino acids from various peptides. The protein is Probable cytosol aminopeptidase of Geobacillus sp. (strain WCH70).